The primary structure comprises 246 residues: tRNA (guanine-N(1)-)-methyltransferase (246 aa).

Residues glycine 113 and 132–137 (LGDYVL) each bind S-adenosyl-L-methionine.

It belongs to the RNA methyltransferase TrmD family. In terms of assembly, homodimer.

It is found in the cytoplasm. It carries out the reaction guanosine(37) in tRNA + S-adenosyl-L-methionine = N(1)-methylguanosine(37) in tRNA + S-adenosyl-L-homocysteine + H(+). Specifically methylates guanosine-37 in various tRNAs. This is tRNA (guanine-N(1)-)-methyltransferase from Lactiplantibacillus plantarum (strain ATCC BAA-793 / NCIMB 8826 / WCFS1) (Lactobacillus plantarum).